The sequence spans 485 residues: Glutamate--tRNA ligase (485 aa).

A 'HIGH' region motif is present at residues 12–22 (PSPTGEPHVGT). Zn(2+) contacts are provided by Cys109, Cys111, Cys136, and His138. A 'KMSKS' region motif is present at residues 253 to 257 (KLSKR). An ATP-binding site is contributed by Lys256.

Belongs to the class-I aminoacyl-tRNA synthetase family. Glutamate--tRNA ligase type 1 subfamily. Monomer. It depends on Zn(2+) as a cofactor.

The protein resides in the cytoplasm. It carries out the reaction tRNA(Glu) + L-glutamate + ATP = L-glutamyl-tRNA(Glu) + AMP + diphosphate. Functionally, catalyzes the attachment of glutamate to tRNA(Glu) in a two-step reaction: glutamate is first activated by ATP to form Glu-AMP and then transferred to the acceptor end of tRNA(Glu). This chain is Glutamate--tRNA ligase, found in Agrobacterium fabrum (strain C58 / ATCC 33970) (Agrobacterium tumefaciens (strain C58)).